Here is a 91-residue protein sequence, read N- to C-terminus: Probable Fe(2+)-trafficking protein (91 aa).

This sequence belongs to the Fe(2+)-trafficking protein family.

Its function is as follows. Could be a mediator in iron transactions between iron acquisition and iron-requiring processes, such as synthesis and/or repair of Fe-S clusters in biosynthetic enzymes. This Paraburkholderia phytofirmans (strain DSM 17436 / LMG 22146 / PsJN) (Burkholderia phytofirmans) protein is Probable Fe(2+)-trafficking protein.